We begin with the raw amino-acid sequence, 549 residues long: Glucose-6-phosphate isomerase (549 aa).

3 positions are modified to N6-acetyllysine: lysine 80, lysine 228, and lysine 234. The Proton donor role is filled by glutamate 355. Residues histidine 386 and lysine 514 contribute to the active site.

This sequence belongs to the GPI family.

Its subcellular location is the cytoplasm. The enzyme catalyses alpha-D-glucose 6-phosphate = beta-D-fructose 6-phosphate. The protein operates within carbohydrate biosynthesis; gluconeogenesis. Its pathway is carbohydrate degradation; glycolysis; D-glyceraldehyde 3-phosphate and glycerone phosphate from D-glucose: step 2/4. Its function is as follows. Catalyzes the reversible isomerization of glucose-6-phosphate to fructose-6-phosphate. This is Glucose-6-phosphate isomerase from Escherichia coli (strain SE11).